Reading from the N-terminus, the 66-residue chain is Alpha-conotoxin-like Tx2 (66 aa).

An N-terminal signal peptide occupies residues 1 to 21 (MGMRMMFTVFLLVVLATTVVS). Residues 22 to 49 (FTSGRRTFHGRNAAAKASGLVSLTDRRP) constitute a propeptide that is removed on maturation. 2 disulfides stabilise this stretch: Cys-51–Cys-57 and Cys-52–Cys-65. The ser-Xaa-Pro motif, crucial for potent interaction with nAChR stretch occupies residues 53–55 (SHP).

This sequence belongs to the conotoxin A superfamily. As to expression, expressed by the venom duct.

The protein resides in the secreted. Its function is as follows. Alpha-conotoxins act on postsynaptic membranes, they bind to the nicotinic acetylcholine receptors (nAChR) and thus inhibit them. The chain is Alpha-conotoxin-like Tx2 from Conus textile (Cloth-of-gold cone).